Here is a 141-residue protein sequence, read N- to C-terminus: Hemoglobin subunit mu (141 aa).

Positions 1 to 141 (MLSAQERAQI…VAVVLTEKYR (141 aa)) constitute a Globin domain. Heme b is bound by residues histidine 58 and histidine 87.

It belongs to the globin family. Expressed in erythroid tissues.

The chain is Hemoglobin subunit mu (HBM) from Homo sapiens (Human).